Reading from the N-terminus, the 528-residue chain is Peptide chain release factor 3 (528 aa).

The tr-type G domain occupies 9-280 (RRRRTFAIIS…LKLAPAPAPR (272 aa)). GTP is bound by residues 18-25 (SHPDAGKT), 86-90 (DTPGH), and 140-143 (NKLD).

The protein belongs to the TRAFAC class translation factor GTPase superfamily. Classic translation factor GTPase family. PrfC subfamily.

Its subcellular location is the cytoplasm. Functionally, increases the formation of ribosomal termination complexes and stimulates activities of RF-1 and RF-2. It binds guanine nucleotides and has strong preference for UGA stop codons. It may interact directly with the ribosome. The stimulation of RF-1 and RF-2 is significantly reduced by GTP and GDP, but not by GMP. In Symbiobacterium thermophilum (strain DSM 24528 / JCM 14929 / IAM 14863 / T), this protein is Peptide chain release factor 3.